Here is a 366-residue protein sequence, read N- to C-terminus: Mitogen-activated protein kinase 13 (366 aa).

One can recognise a Protein kinase domain in the interval 25-308; that stretch reads YVSLTHIGSG…ASQALAHPFF (284 aa). 31-39 is a binding site for ATP; that stretch reads IGSGAYGSV. A Phosphoserine modification is found at serine 47. An ATP-binding site is contributed by lysine 54. Aspartate 150 acts as the Proton acceptor in catalysis. The residue at position 180 (threonine 180) is a Phosphothreonine; by MAP2K3, MAP2K4, MAP2K6 and MAP2K7. Positions 180–182 match the TXY motif; the sequence is TGY. A Phosphotyrosine; by MAP2K3, MAP2K4, MAP2K6 and MAP2K7 modification is found at tyrosine 182. Position 350 is a phosphoserine (serine 350).

Belongs to the protein kinase superfamily. CMGC Ser/Thr protein kinase family. MAP kinase subfamily. In terms of assembly, interacts with MAPK8IP2. Requires Mg(2+) as cofactor. In terms of processing, dually phosphorylated on Thr-180 and Tyr-182 by MAP2K3/MKK3, MAP2K4/MKK4, MAP2K6/MKK6 and MAP2K7/MKK7, which activates the enzyme. Dephosphorylated by dual specificity phosphatase DUSP1.

It catalyses the reaction L-seryl-[protein] + ATP = O-phospho-L-seryl-[protein] + ADP + H(+). It carries out the reaction L-threonyl-[protein] + ATP = O-phospho-L-threonyl-[protein] + ADP + H(+). With respect to regulation, activated by phosphorylation on threonine and tyrosine by dual specificity kinases, MAP2K3/MKK3 MAP2K6/MKK6, MAP2K4/MKK4 and MAP2K7/MKK7. Activation by ultraviolet radiation, hyperosmotic shock, anisomycin or by TNF-alpha is mediated by MAP2K3/MKK3. Inhibited by dual specificity phosphatase DUSP1. In terms of biological role, serine/threonine kinase which acts as an essential component of the MAP kinase signal transduction pathway. MAPK13 is one of the four p38 MAPKs which play an important role in the cascades of cellular responses evoked by extracellular stimuli such as pro-inflammatory cytokines or physical stress leading to direct activation of transcription factors such as ELK1 and ATF2. Accordingly, p38 MAPKs phosphorylate a broad range of proteins and it has been estimated that they may have approximately 200 to 300 substrates each. MAPK13 is one of the less studied p38 MAPK isoforms. Some of the targets are downstream kinases such as MAPKAPK2, which are activated through phosphorylation and further phosphorylate additional targets. Plays a role in the regulation of protein translation by phosphorylating and inactivating EEF2K. Involved in cytoskeletal remodeling through phosphorylation of MAPT and STMN1. Mediates UV irradiation induced up-regulation of the gene expression of CXCL14. Plays an important role in the regulation of epidermal keratinocyte differentiation, apoptosis and skin tumor development. Phosphorylates the transcriptional activator MYB in response to stress which leads to rapid MYB degradation via a proteasome-dependent pathway. MAPK13 also phosphorylates and down-regulates PRKD1 during regulation of insulin secretion in pancreatic beta cells. This Bos taurus (Bovine) protein is Mitogen-activated protein kinase 13 (MAPK13).